Reading from the N-terminus, the 301-residue chain is N-acetylmuramic acid 6-phosphate etherase (301 aa).

Residues 59 to 222 form the SIS domain; the sequence is TSEALMHGGR…STSVMVKLGK (164 aa). The active-site Proton donor is the E87. The active site involves E118.

The protein belongs to the GCKR-like family. MurNAc-6-P etherase subfamily. As to quaternary structure, homodimer.

It catalyses the reaction N-acetyl-D-muramate 6-phosphate + H2O = N-acetyl-D-glucosamine 6-phosphate + (R)-lactate. It functions in the pathway amino-sugar metabolism; N-acetylmuramate degradation. Its function is as follows. Specifically catalyzes the cleavage of the D-lactyl ether substituent of MurNAc 6-phosphate, producing GlcNAc 6-phosphate and D-lactate. This Picosynechococcus sp. (strain ATCC 27264 / PCC 7002 / PR-6) (Agmenellum quadruplicatum) protein is N-acetylmuramic acid 6-phosphate etherase.